The following is a 689-amino-acid chain: Choline transporter-like 1 (689 aa).

The helical transmembrane segment at 23 to 43 threads the bilayer; the sequence is IFWLVVYILFWIALLVIAVFS. Asn134 carries N-linked (GlcNAc...) asparagine glycosylation. Transmembrane regions (helical) follow at residues 199-219 and 233-255; these read FSDI…SLIF and IISW…VLWW. Residue Asn279 is glycosylated (N-linked (GlcNAc...) asparagine). 2 helical membrane passes run 283–303 and 333–353; these read IYVL…VIYY and VLAF…IVCL. 2 N-linked (GlcNAc...) asparagine glycosylation sites follow: Asn375 and Asn389. 4 helical membrane-spanning segments follow: residues 412 to 432, 461 to 481, 562 to 582, and 591 to 611; these read IYII…QLVI, LGSV…RLIL, LVLF…SILM, and FYMA…HIVL.

This sequence belongs to the CTL (choline transporter-like) family.

The protein resides in the membrane. The polypeptide is Choline transporter-like 1 (Aedes aegypti (Yellowfever mosquito)).